A 133-amino-acid polypeptide reads, in one-letter code: Small ribosomal subunit protein uS11 (133 aa).

A disordered region spans residues 1–22; it reads MPPKTRGAVRKPRKKDKKNIAL. Residues 7-17 show a composition bias toward basic residues; that stretch reads GAVRKPRKKDK.

This sequence belongs to the universal ribosomal protein uS11 family. In terms of assembly, part of the 30S ribosomal subunit. Interacts with proteins S7 and S18. Binds to IF-3.

Functionally, located on the platform of the 30S subunit, it bridges several disparate RNA helices of the 16S rRNA. Forms part of the Shine-Dalgarno cleft in the 70S ribosome. This Renibacterium salmoninarum (strain ATCC 33209 / DSM 20767 / JCM 11484 / NBRC 15589 / NCIMB 2235) protein is Small ribosomal subunit protein uS11.